Consider the following 610-residue polypeptide: Elongation factor 4 (610 aa).

In terms of domain architecture, tr-type G spans Gln11–Thr193. Residues Asp23–Thr28 and Asn140–Asp143 contribute to the GTP site.

This sequence belongs to the TRAFAC class translation factor GTPase superfamily. Classic translation factor GTPase family. LepA subfamily.

It localises to the cell membrane. The enzyme catalyses GTP + H2O = GDP + phosphate + H(+). Required for accurate and efficient protein synthesis under certain stress conditions. May act as a fidelity factor of the translation reaction, by catalyzing a one-codon backward translocation of tRNAs on improperly translocated ribosomes. Back-translocation proceeds from a post-translocation (POST) complex to a pre-translocation (PRE) complex, thus giving elongation factor G a second chance to translocate the tRNAs correctly. Binds to ribosomes in a GTP-dependent manner. The polypeptide is Elongation factor 4 (Limosilactobacillus fermentum (strain NBRC 3956 / LMG 18251) (Lactobacillus fermentum)).